The primary structure comprises 393 residues: Serine/threonine-protein kinase US3 homolog (393 aa).

The Protein kinase domain maps to 93 to 378 (FVILKTFTPG…AEVLLNHSVF (286 aa)). Residues 99–107 (FTPGAEGFA) and Lys122 each bind ATP. The active-site Proton acceptor is Asp206.

This sequence belongs to the protein kinase superfamily. Ser/Thr protein kinase family. Post-translationally, phosphorylated by ORF47; this phosphorylation regulates subsequent phosphorylation of proteins 24 and 27 by ORF66. Autophosphorylated.

It localises to the host cytoplasm. It is found in the host nucleus. It catalyses the reaction L-seryl-[protein] + ATP = O-phospho-L-seryl-[protein] + ADP + H(+). The enzyme catalyses L-threonyl-[protein] + ATP = O-phospho-L-threonyl-[protein] + ADP + H(+). Functionally, multifunctional serine/threonine kinase that plays a role in several processes including egress of virus particles from the nucleus, modulation of the actin cytoskeleton and inhibition of apoptosis. Phosphorylates proteins 24 and 27, two critical regulators of capsid budding from nucleus to endoplasmic reticulum, thereby facilitating virion egress. Modulates and redistributes host components of the nuclear envelope, including LMNA, emerin/EMD and the nuclear matrix protein MATR3. Phosphorylates envelope glycoprotein B (gB), probably to direct it to the cell surface. Promotes virus intracellular spread by restructuring host cell cytoskeleton. Blocks host apoptosis to extend cell survival and allow efficient viral replication. Promotes viral gene expression by phosphorylating host HDAC2 to reduce viral genome silencing. Down-regulates class I major histocompatibility complex (MHC-I) surface expression. Additionally, phosphorylates IE62 and targets it to the cytoplasm. The nuclear exclusion of IE62 enables the packaging of abundant levels of IE62 into virions. This is Serine/threonine-protein kinase US3 homolog (66) from Varicella-zoster virus (strain Dumas) (HHV-3).